A 284-amino-acid chain; its full sequence is Co-chaperone protein DjlA (284 aa).

The Periplasmic portion of the chain corresponds to 1-6; that stretch reads MHIFGK. The chain crosses the membrane as a helical span at residues 7-30; it reads ILGAFFGFLFGGPFGAIFGIFLGH. The Cytoplasmic segment spans residues 31–284; the sequence is QFDKARRLNQ…ELIRKEKGIK (254 aa). The disordered stretch occupies residues 190–211; the sequence is QGGGFGGSQQQSHSGQQWQQPS. Over residues 197–211 the composition is skewed to low complexity; sequence SQQQSHSGQQWQQPS. In terms of domain architecture, J spans 218-284; that stretch reads DAYEVLGVSE…ELIRKEKGIK (67 aa).

As to quaternary structure, homodimer.

Its subcellular location is the cell inner membrane. Its function is as follows. Regulatory DnaK co-chaperone. Direct interaction between DnaK and DjlA is needed for the induction of the wcaABCDE operon, involved in the synthesis of a colanic acid polysaccharide capsule, possibly through activation of the RcsB/RcsC phosphotransfer signaling pathway. The colanic acid capsule may help the bacterium survive conditions outside the host. The polypeptide is Co-chaperone protein DjlA (Vibrio cholerae serotype O1 (strain ATCC 39315 / El Tor Inaba N16961)).